The sequence spans 864 residues: Xylosyltransferase 2 (864 aa).

The Cytoplasmic segment spans residues 1-15 (MVASARVQKLVRRYK). Residues 16–36 (LAIATALAILLLQGLVVWSFS) traverse the membrane as a helical; Signal-anchor for type II membrane protein segment. Residues 37-864 (GLEEDEPGEK…GPVKADGRLR (828 aa)) are Lumenal-facing. Disordered regions lie at residues 39–123 (EEDE…RQNL) and 136–158 (AGFPQHGDTGSVEGAPQPTDNSF). Over residues 53 to 65 (RPLDPGEGSKDTD) the composition is skewed to basic and acidic residues. Residues 73–82 (SAGRRHGRWR) show a composition bias toward basic residues. N-linked (GlcNAc...) asparagine glycosylation occurs at N122. 4 cysteine pairs are disulfide-bonded: C162–C190, C206–C448, C467–C480, and C469–C478. UDP-alpha-D-xylose is bound by residues V239, D267, and 296-298 (TIW). N-linked (GlcNAc...) asparagine glycosylation is present at N327. A UDP-alpha-D-xylose-binding site is contributed by 400–401 (DW). Residues S481 and 504–505 (RK) each bind UDP-alpha-D-xylose. Cystine bridges form between C580-C832 and C825-C838. N682 is a glycosylation site (N-linked (GlcNAc...) asparagine).

The protein belongs to the glycosyltransferase 14 family. XylT subfamily. In terms of assembly, monomer. Mg(2+) serves as cofactor. Requires Mn(2+) as cofactor. Post-translationally, contains disulfide bonds.

The protein localises to the golgi apparatus membrane. The protein resides in the secreted. It carries out the reaction UDP-alpha-D-xylose + L-seryl-[protein] = 3-O-(beta-D-xylosyl)-L-seryl-[protein] + UDP + H(+). It functions in the pathway glycan metabolism; chondroitin sulfate biosynthesis. Its pathway is glycan metabolism; heparan sulfate biosynthesis. Its function is as follows. Catalyzes the first step in the biosynthesis of chondroitin sulfate, heparan sulfate and dermatan sulfate proteoglycans, such as DCN. Transfers D-xylose from UDP-D-xylose to specific serine residues of the core protein. This is Xylosyltransferase 2 (Xylt2) from Rattus norvegicus (Rat).